The sequence spans 691 residues: Elongation factor G (691 aa).

The tr-type G domain occupies 8 to 283; it reads KKVRNIGIAA…AVVAYLPAPD (276 aa). GTP contacts are provided by residues 17-24, 81-85, and 135-138; these read AHIDAGKT, DTPGH, and NKMD.

This sequence belongs to the TRAFAC class translation factor GTPase superfamily. Classic translation factor GTPase family. EF-G/EF-2 subfamily.

The protein resides in the cytoplasm. Its function is as follows. Catalyzes the GTP-dependent ribosomal translocation step during translation elongation. During this step, the ribosome changes from the pre-translocational (PRE) to the post-translocational (POST) state as the newly formed A-site-bound peptidyl-tRNA and P-site-bound deacylated tRNA move to the P and E sites, respectively. Catalyzes the coordinated movement of the two tRNA molecules, the mRNA and conformational changes in the ribosome. In Campylobacter jejuni subsp. jejuni serotype O:6 (strain 81116 / NCTC 11828), this protein is Elongation factor G.